The following is a 421-amino-acid chain: UDP-N-acetylglucosamine 1-carboxyvinyltransferase 1 (421 aa).

Position 22–23 (22–23 (KN)) interacts with phosphoenolpyruvate. Arginine 95 provides a ligand contact to UDP-N-acetyl-alpha-D-glucosamine. Cysteine 119 serves as the catalytic Proton donor. Cysteine 119 is modified (2-(S-cysteinyl)pyruvic acid O-phosphothioketal). UDP-N-acetyl-alpha-D-glucosamine is bound by residues 124–128 (RPIEQ), aspartate 308, and valine 330.

This sequence belongs to the EPSP synthase family. MurA subfamily.

The protein resides in the cytoplasm. It carries out the reaction phosphoenolpyruvate + UDP-N-acetyl-alpha-D-glucosamine = UDP-N-acetyl-3-O-(1-carboxyvinyl)-alpha-D-glucosamine + phosphate. It functions in the pathway cell wall biogenesis; peptidoglycan biosynthesis. In terms of biological role, cell wall formation. Adds enolpyruvyl to UDP-N-acetylglucosamine. In Staphylococcus aureus (strain MW2), this protein is UDP-N-acetylglucosamine 1-carboxyvinyltransferase 1.